The primary structure comprises 283 residues: NAD kinase (283 aa).

The active-site Proton acceptor is the Asp66. NAD(+)-binding positions include 66 to 67, Arg71, 137 to 138, His165, Asp167, and 178 to 183; these read DG, ND, and TGYSMS.

This sequence belongs to the NAD kinase family. Requires a divalent metal cation as cofactor.

It is found in the cytoplasm. It carries out the reaction NAD(+) + ATP = ADP + NADP(+) + H(+). Involved in the regulation of the intracellular balance of NAD and NADP, and is a key enzyme in the biosynthesis of NADP. Catalyzes specifically the phosphorylation on 2'-hydroxyl of the adenosine moiety of NAD to yield NADP. The chain is NAD kinase from Agathobacter rectalis (strain ATCC 33656 / DSM 3377 / JCM 17463 / KCTC 5835 / VPI 0990) (Eubacterium rectale).